The primary structure comprises 140 residues: Fluoride-specific ion channel FluC 1 (140 aa).

4 helical membrane-spanning segments follow: residues 4–24, 32–52, 70–90, and 99–119; these read LYLA…ASFI, FPLA…FILT, TGML…LHLL, and LLYL…GIFL. Na(+) is bound by residues G74 and T77.

The protein belongs to the fluoride channel Fluc/FEX (TC 1.A.43) family.

It is found in the cell membrane. The catalysed reaction is fluoride(in) = fluoride(out). Its activity is regulated as follows. Na(+) is not transported, but it plays an essential structural role and its presence is essential for fluoride channel function. In terms of biological role, fluoride-specific ion channel. Important for reducing fluoride concentration in the cell, thus reducing its toxicity. This is Fluoride-specific ion channel FluC 1 from Moorella thermoacetica (strain ATCC 39073 / JCM 9320).